A 456-amino-acid polypeptide reads, in one-letter code: uncharacterized protein (456 aa).

A YrdC-like domain is found at 277-440 (IKNTKTIKQL…TKQLVRTTAK (164 aa)).

This is an uncharacterized protein from Mycoplasma genitalium (strain ATCC 33530 / DSM 19775 / NCTC 10195 / G37) (Mycoplasmoides genitalium).